The primary structure comprises 1388 residues: ABC transporter G family member 52 (1388 aa).

The segment at 1-24 (MDDAGEICSFSRSSSSAREDDEED) is disordered. Residues 135–406 (TNALCITKKI…FKSVGFKCPE (272 aa)) form the ABC transporter 1 domain. Residue 168–175 (GPPGSGKT) participates in ATP binding. The region spanning 484–697 (ELLKANIYRE…ALNALAVNEF (214 aa)) is the ABC transmembrane type-2 1 domain. 7 consecutive transmembrane segments (helical) span residues 503–523 (LYIF…TVFI), 541–561 (ALFY…GPAI), 590–610 (IPIS…VIGF), 621–641 (FLVL…IVAL), 646–666 (VIAS…CGFI), 675–695 (WWIW…LAVN), and 732–752 (ISIG…TICL). The 253-residue stretch at 791 to 1043 (ITFEDIRYSV…ELIKYFEAIQ (253 aa)) folds into the ABC transporter 2 domain. 836–843 (GVSGAGKT) is an ATP binding site. The 215-residue stretch at 1116 to 1330 (TQWLACLWKQ…TLNGLLTSQF (215 aa)) folds into the ABC transmembrane type-2 2 domain. 7 helical membrane-spanning segments follow: residues 1136-1156 (IVVR…MFWG), 1167-1183 (LFSI…AMGV), 1223-1243 (FPYI…MVGY), 1250-1270 (FLWY…YGMM), 1280-1300 (MSAV…GFLI), 1305-1325 (IPVW…LNGL), and 1357-1377 (LLWV…FLFG).

It belongs to the ABC transporter superfamily. ABCG family. PDR (TC 3.A.1.205) subfamily.

Its subcellular location is the membrane. Functionally, may be a general defense protein. In Oryza sativa subsp. japonica (Rice), this protein is ABC transporter G family member 52.